Consider the following 354-residue polypeptide: Cysteine proteinase A (354 aa).

Residues 1–24 form the signal peptide; sequence MARRNPLLFAIVVTILFVVCYGSA. A propeptide spans 25 to 125 (activation peptide); it reads LIAQTPPPVD…HKEDVHVDDS (101 aa). Disulfide bonds link Cys-150–Cys-191, Cys-184–Cys-229, and Cys-282–Cys-330. Cys-153 is a catalytic residue. Residue Asn-208 is glycosylated (N-linked (GlcNAc...) asparagine). Catalysis depends on residues His-289 and Asn-309.

The protein belongs to the peptidase C1 family.

The protein is Cysteine proteinase A (LMCPA) of Leishmania mexicana.